We begin with the raw amino-acid sequence, 164 residues long: Transcriptional repressor NrdR (164 aa).

A zinc finger lies at 3 to 34 (CPKCNYHKSSVVDSRQAEDGNTIRRRRECEQC). Residues 49-139 (LLVIKKDGTR…VYKSFKDVDE (91 aa)) enclose the ATP-cone domain.

This sequence belongs to the NrdR family. It depends on Zn(2+) as a cofactor.

Negatively regulates transcription of bacterial ribonucleotide reductase nrd genes and operons by binding to NrdR-boxes. This Streptococcus pyogenes serotype M6 (strain ATCC BAA-946 / MGAS10394) protein is Transcriptional repressor NrdR.